Consider the following 570-residue polypeptide: Sorting nexin-41 (570 aa).

Disordered regions lie at residues 1–31 (MSDF…PSAS) and 81–115 (FDDG…TTAS). The span at 84 to 101 (GSNSFSATPTASITNQND) shows a compositional bias: polar residues. The PX domain maps to 98–236 (NQNDTAHEAT…RFLDPHASWS (139 aa)). A 1,2-diacyl-sn-glycero-3-phospho-(1D-myo-inositol-3-phosphate) contacts are provided by arginine 153, serine 155, lysine 179, and arginine 202. Residues 429–498 (DSQRINDALG…ASRRQGIGKT (70 aa)) form a disordered region. The span at 440 to 454 (TRSNNGPSTTNSGEQ) shows a compositional bias: polar residues. A compositionally biased stretch (low complexity) spans 455–464 (PSASPAPKKS).

This sequence belongs to the sorting nexin family.

It localises to the endosome membrane. Its subcellular location is the endomembrane system. In terms of biological role, may be required for cytoplasm to vacuole transport (Cvt) and pexophagy. The chain is Sorting nexin-41 (SNX41) from Yarrowia lipolytica (strain CLIB 122 / E 150) (Yeast).